Reading from the N-terminus, the 1265-residue chain is MASSSSSIFTGVKFSPILAPFNSGDSRRSRYLKDSRNKVRFNPSSPRLTPHRVRVEAPSLIPYNGLWAAQPNSHKGRLKRNIVSGKEATGISLSQGRNFCLTCKRNQAGIRRALPSAFVDRTAFSLSRSSLTSSLRKHSQIVNATLGPDEPHAAGTAWPDGIVAERQDLDLLPPEIDSAELEAFLGCELPSHPKLHRGQLKNGLRYLILPNKVPPNRFEAHMEVHVGSIDEEEDEQGIAHMIEHVAFLGSKKREKLLGTGARSNAYTDFHHTVFHIHSPTHTKDSEDDLFPSVLDALNEIAFHPKFLSSRVEKERRAILSELQMMNTIEYRVDCQLLQHLHSENKLGRRFPIGLEEQIKKWDVDKIRKFHERWYFPANATLYIVGDIDNIPRIVHNIEAVFGKNGLDNESTPSSPSPGAFGAMANFLVPKLPAGLGGTFSNEKTNTADQSKMIKRERHAIRPPVEHNWSLPGTSVDLKPPQIFKHELLQNFAINMFCKIPVSKVQTFGDLRNVLMKRIFLSALHFRINTRYKSSNPPFTSVELDHSDSGREGCTVTTLTVTAEPQNWQNAVKVAVQEVRRLKEFGVTRGELTRYMDALLKDSEHLAAMIDNVSSVDNLDFIMESDALSHTVMDQTQGHETLVAVAGTVTLEEVNTVGAKVLEFISDFGRPTAPLPAAIVACVPTKVHVDGVGESDFNISPDEIIESVKSGLLAPIEAEPELEVPKELISQSQLKELTLQRNPCFVPIPGSGLTKLHDKETGITQLRLSNGIAVNYKKSTTESRAGVMRLIVGGGRAAETSDSKGAVVVGVRTLSEGGRVGDFSREQVELFCVNHLINCSLESTEEFIAMEFRFTLRDNGMQAAFQLLHMVLERSVWLEDAFDRARQLYLSYFRSIPKSLERATAHKLMIAMLNGDERFVEPTPKSLQSLNLESVKDAVMSHFVGDNMEVSIVGDFSEEEIERCILDYLGTVKASHDSAKPPGSEPILFRQPTAGLQFQQVFLKDTDERACAYIAGPAPNRWGFTVDGDDLFQSVSKLPVAHDGLLKSEEQLLEGGDRELQKKLRAHPLFFGVTMGLLAEIINSRLFTTVRDSLGLTYDVSFELNLFDRLNLGWYVISVTSTPGKVYKAVDACKSVLRGLHSNQIAPRELDRAKRTLLMRHEAELKSNAYWLNLLAHLQASSVPRKELSCIKELVSLYEAASIEDIYLAYNQLRVDEDSLYSCIGIAGAQAGEEITVLSEEEEPEDVFSGVVPVGRGSSMTTRPTT.

The N-terminal 143 residues, 1-143 (MASSSSSIFT…SLRKHSQIVN (143 aa)), are a transit peptide targeting the chloroplast. H240 contributes to the Zn(2+) binding site. The Proton acceptor role is filled by E243. H244 lines the Zn(2+) pocket. The active site involves E314. Position 321 (E321) interacts with Zn(2+).

The protein belongs to the peptidase M16 family. Zn(2+) is required as a cofactor.

The protein resides in the plastid. It is found in the chloroplast stroma. Cleaves presequences (transit peptides) from chloroplastic protein precursors. Initially recognizes a precursor by binding to the C-terminus of its transit peptide and then removes the transit peptide in a single endoproteolytic step. In a next step, pursues the cleavage of transit peptide to a subfragment form. The polypeptide is Stromal processing peptidase, chloroplastic (Arabidopsis thaliana (Mouse-ear cress)).